The sequence spans 529 residues: Sodium/hydrogen exchanger 4 (529 aa).

Over 1–19 the chain is Cytoplasmic; sequence MSIGLTEFVTNKLAAEHPQ. A helical transmembrane segment spans residues 20–40; sequence VIPISVFIAILCLCLVIGHLL. The Vacuolar portion of the chain corresponds to 41–45; it reads EENRW. Residues 46–66 form a helical membrane-spanning segment; it reads VNESITAILVGAASGTVILLI. The Cytoplasmic segment spans residues 67 to 73; the sequence is SKGKSSH. Positions 74-94 form an intramembrane region, helical; it reads ILVFDEELFFIYLLPPIIFNA. At 95-112 the chain is on the cytoplasmic side; that stretch reads GFQVKKKKFFHNFLTIMS. The chain crosses the membrane as a helical span at residues 113 to 133; it reads FGVIGVFISTVIISFGTWWLF. Topologically, residues 134–171 are vacuolar; the sequence is PKLGFKGLSARDYLAIGTIFSSTDTVCTLQILHQDETP. The helical transmembrane segment at 172 to 192 threads the bilayer; sequence LLYSLVFGEGVVNDATSVVLF. The Cytoplasmic segment spans residues 193–214; sequence NAVQKIQFESLTGWTALQVFGN. A helical membrane pass occupies residues 215–235; sequence FLYLFSTSTLLGIGVGLITSF. The Vacuolar segment spans residues 236–250; it reads VLKTLYFGRHSTTRE. Residues 251-267 traverse the membrane as a helical segment; sequence LAIMVLMAYLSYMLAEL. Residues 268–273 lie on the Cytoplasmic side of the membrane; it reads FSLSGI. Residues 274–291 form a helical membrane-spanning segment; the sequence is LTVFFCGVLMSHYASYNV. Residues 292-301 are Vacuolar-facing; the sequence is TESSRITSRH. A helical transmembrane segment spans residues 302 to 322; it reads VFAMLSFIAETFIFLYVGTDA. Over 323 to 342 the chain is Cytoplasmic; sequence LDFTKWKTSSLSFGGTLGVS. Residues 343 to 363 form a helical membrane-spanning segment; sequence GVITALVLLGRAAFVFPLSVL. The Vacuolar segment spans residues 364–380; that stretch reads TNFMNRHTERNESITFK. Asn374 is a glycosylation site (N-linked (GlcNAc...) asparagine). A helical membrane pass occupies residues 381–401; the sequence is HQVIIWWAGLMRGAVSIALAF. The Cytoplasmic portion of the chain corresponds to 402 to 415; the sequence is KQFTYSGVTLDPVN. A helical transmembrane segment spans residues 416–436; the sequence is AAMVTNTTIVVLFTTLVFGFL. The Vacuolar segment spans residues 437–529; the sequence is TKPLVNYLLP…GPRRENQPEC (93 aa).

It belongs to the monovalent cation:proton antiporter 1 (CPA1) transporter (TC 2.A.36) family. As to expression, expressed at very low levels in roots and shoots.

It localises to the vacuole membrane. The catalysed reaction is Na(+)(in) + H(+)(out) = Na(+)(out) + H(+)(in). It catalyses the reaction K(+)(in) + H(+)(out) = K(+)(out) + H(+)(in). May act in low affinity electroneutral exchange of protons for cations such as Na(+) or K(+) across membranes. May also exchange Li(+) and Cs(+) with a lower affinity. This Arabidopsis thaliana (Mouse-ear cress) protein is Sodium/hydrogen exchanger 4 (NHX4).